The primary structure comprises 387 residues: MVFAFWKVFLILSCLAGQVSVVQVTIPDGFVNVTVGSNVTLICIYTTTVASREQLSIQWSFFHKKEMEPISIYFSQGGQAVAIGQFKDRITGSNDPGNASITISHMQPADSGIYICDVNNPPDFLGQNQGILNVSVLVKPSKPLCSVQGRPETGHTISLSCLSALGTPSPVYYWHKLEGRDIVPVKENFNPTTGILVIGNLTNFEQGYYQCTAINRLGNSSCEIDLTSSHPEVGIIVGALIGSLVGAAIIISVVCFARNKAKAKAKERNSKTIAELEPMTKINPRGESEAMPREDATQLEVTLPSSIHETGPDTIQEPDYEPKPTQEPAPEPAPGSEPMAVPDLDIELELEPETQSELEPEPEPEPESEPGVVVEPLSEDEKGVVKA.

Residues 1–21 (MVFAFWKVFLILSCLAGQVSV) form the signal peptide. Residues 22-132 (VQVTIPDGFV…DFLGQNQGIL (111 aa)) enclose the Ig-like V-type domain. Residues 22-232 (VQVTIPDGFV…EIDLTSSHPE (211 aa)) lie on the Extracellular side of the membrane. N-linked (GlcNAc...) asparagine glycosylation is found at asparagine 32 and asparagine 38. An intrachain disulfide couples cysteine 43 to cysteine 116. 3 N-linked (GlcNAc...) asparagine glycosylation sites follow: asparagine 133, asparagine 200, and asparagine 219. One can recognise an Ig-like C2-type domain in the interval 140–227 (PSKPLCSVQG…GNSSCEIDLT (88 aa)). Cysteine 161 and cysteine 211 are oxidised to a cystine. The helical transmembrane segment at 233 to 253 (VGIIVGALIGSLVGAAIIISV) threads the bilayer. Over 254–387 (VCFARNKAKA…SEDEKGVVKA (134 aa)) the chain is Cytoplasmic. The disordered stretch occupies residues 266-387 (KERNSKTIAE…SEDEKGVVKA (122 aa)). Positions 284–296 (PRGESEAMPREDA) are enriched in basic and acidic residues. Residues 299–308 (LEVTLPSSIH) show a composition bias toward polar residues. Residues 325-335 (TQEPAPEPAPG) are compositionally biased toward pro residues. A compositionally biased stretch (acidic residues) spans 344–368 (LDIELELEPETQSELEPEPEPEPES).

Post-translationally, highly N-glycosylated. Appears not to contain significant amounts of O-linked carbohydrates or sialic acid in its sugar moieties. Detected only in stomach mucosa and testis, and to a much lesser level in pancreas (at protein level). Detected in gastric cancers (31%), esophageal carcinomas (50%) and ovarian cancers (23%).

It is found in the membrane. This Homo sapiens (Human) protein is V-set and immunoglobulin domain-containing protein 1 (VSIG1).